A 173-amino-acid chain; its full sequence is Crossover junction endodeoxyribonuclease RuvC (173 aa).

Active-site residues include D8, E67, and D139. Residues D8, E67, and D139 each contribute to the Mg(2+) site.

Belongs to the RuvC family. Homodimer which binds Holliday junction (HJ) DNA. The HJ becomes 2-fold symmetrical on binding to RuvC with unstacked arms; it has a different conformation from HJ DNA in complex with RuvA. In the full resolvosome a probable DNA-RuvA(4)-RuvB(12)-RuvC(2) complex forms which resolves the HJ. Mg(2+) serves as cofactor.

Its subcellular location is the cytoplasm. The catalysed reaction is Endonucleolytic cleavage at a junction such as a reciprocal single-stranded crossover between two homologous DNA duplexes (Holliday junction).. Functionally, the RuvA-RuvB-RuvC complex processes Holliday junction (HJ) DNA during genetic recombination and DNA repair. Endonuclease that resolves HJ intermediates. Cleaves cruciform DNA by making single-stranded nicks across the HJ at symmetrical positions within the homologous arms, yielding a 5'-phosphate and a 3'-hydroxyl group; requires a central core of homology in the junction. The consensus cleavage sequence is 5'-(A/T)TT(C/G)-3'. Cleavage occurs on the 3'-side of the TT dinucleotide at the point of strand exchange. HJ branch migration catalyzed by RuvA-RuvB allows RuvC to scan DNA until it finds its consensus sequence, where it cleaves and resolves the cruciform DNA. The sequence is that of Crossover junction endodeoxyribonuclease RuvC from Edwardsiella ictaluri (strain 93-146).